The primary structure comprises 911 residues: Band 3 anion transport protein (911 aa).

Methionine 1 bears the N-acetylmethionine mark. Residues methionine 1–isoleucine 26 are compositionally biased toward acidic residues. Positions methionine 1–glutamate 40 are disordered. The Cytoplasmic portion of the chain corresponds to methionine 1 to proline 403. Phosphotyrosine is present on residues tyrosine 8, tyrosine 21, and tyrosine 46. Residues glutamate 13–methionine 31 form a (Microbial infection) Interaction with P.falciparum (isolate K1) FBPA region. Positions histidine 55–serine 290 are globular. The interaction with ANK1 stretch occupies residues alanine 176–serine 185. Residues serine 185 and serine 350 each carry the phosphoserine modification. The tract at residues arginine 304 to serine 357 is dimerization arm. Tyrosine 359 carries the phosphotyrosine modification. A helical transmembrane segment spans residues glutamine 404–leucine 427. Over glycine 428–methionine 435 the chain is Extracellular. A helical membrane pass occupies residues glycine 436 to alanine 456. At glutamine 457–leucine 459 the chain is on the cytoplasmic side. Residues leucine 460–phenylalanine 476 traverse the membrane as a discontinuously helical segment. Residues serine 477–glutamate 485 lie on the Extracellular side of the membrane. A helical membrane pass occupies residues tyrosine 486–alanine 506. The Cytoplasmic portion of the chain corresponds to phenylalanine 507 to arginine 518. A helical membrane pass occupies residues tyrosine 519 to isoleucine 541. Residues lysine 542–threonine 570 are Extracellular-facing. The tract at residues methionine 559–glutamine 630 is involved in anion transport. A helical transmembrane segment spans residues alanine 571–phenylalanine 591. Residues lysine 592 to arginine 602 lie on the Cytoplasmic side of the membrane. The chain crosses the membrane as a helical span at residues arginine 603–phenylalanine 623. Topologically, residues isoleucine 624–methionine 663 are extracellular. Asparagine 642 is a glycosylation site (N-linked (GlcNAc...) (complex) asparagine). Residues methionine 664 to isoleucine 684 traverse the membrane as a helical segment. Residues threonine 685–serine 700 lie on the Cytoplasmic side of the membrane. The chain crosses the membrane as a helical span at residues glycine 701–phenylalanine 719. Residues glycine 720 to alanine 737 form a discontinuously helical membrane-spanning segment. A (Microbial infection) 5ABC region; interaction with P.falciparum (isolate 3D7) MSP9 region spans residues glycine 720–isoleucine 761. The Cytoplasmic portion of the chain corresponds to leucine 738–arginine 760. A run of 2 helical transmembrane segments spans residues isoleucine 761 to serine 781 and arginine 782 to leucine 800. The Cytoplasmic segment spans residues serine 801–glycine 838. The segment at residues isoleucine 839–leucine 869 is an intramembrane region (discontinuously helical). Cysteine 843 carries the S-palmitoyl cysteine lipid modification. The Cytoplasmic portion of the chain corresponds to arginine 870 to valine 911. Tyrosine 904 is subject to Phosphotyrosine.

The protein belongs to the anion exchanger (TC 2.A.31) family. In terms of assembly, a dimer in solution, but in its membrane environment, it exists primarily as a mixture of dimers and tetramers and spans the membrane asymmetrically. Component of the ankyrin-1 complex in the erythrocyte, composed of ANK1, RHCE, RHAG, SLC4A1, EPB42, GYPA, GYPB and AQP1. Interacts with STOM; this interaction positively regulates SLC4A1 activity. Interacts with GYPA; a GYPA monomer is bound at each end of the SLC4A1 dimer forming a heterotetramer. Three SLC4A1 dimers (Band 3-I, Band 3-II and Band 3-III) participates in the ankyrin-1 complex. Interacts (via the cytoplasmic domain) with EPB42; this interaction is mediated by the SLC4A1 Band 3-I dimer. Interacts (via the cytoplasmic domain) directly with ANK1; this interaction is mediated by the SLC4A1 Band 3-II and Band 3-III dimers. As to quaternary structure, interacts with TMEM139. (Microbial infection) Interacts (via N-terminus) with P.falciparum (isolate K1) aldolase FBPA; the interaction inhibits FBPA catalytic activity. In terms of assembly, (Microbial infection) Interacts (via the 5ABC region) with P.falciparum (isolate 3D7) MSP9/ABRA (via N-terminus). As to quaternary structure, (Microbial infection) Interacts (via the 5ABC region) with P.falciparum (isolate 3D7) MSP1 p42 subunit. Phosphorylated on Tyr-8 and Tyr-21 most likely by SYK. PP1-resistant phosphorylation that precedes Tyr-359 and Tyr-904 phosphorylation. Post-translationally, phosphorylated on Tyr-359 and Tyr-904 most likely by LYN. PP1-inhibited phosphorylation that follows Tyr-8 and Tyr-21 phosphorylation. In terms of processing, N-glycosylated. In terms of tissue distribution, detected in erythrocytes (at protein level). Expressed in kidney (at protein level).

The protein resides in the cell membrane. It is found in the basolateral cell membrane. The enzyme catalyses hydrogencarbonate(in) + chloride(out) = hydrogencarbonate(out) + chloride(in). Its activity is regulated as follows. Phenyl isothiocyanate inhibits anion transport in vitro. Its function is as follows. Functions both as a transporter that mediates electroneutral anion exchange across the cell membrane and as a structural protein. Component of the ankyrin-1 complex of the erythrocyte membrane; required for normal flexibility and stability of the erythrocyte membrane and for normal erythrocyte shape via the interactions of its cytoplasmic domain with cytoskeletal proteins, glycolytic enzymes, and hemoglobin. Functions as a transporter that mediates the 1:1 exchange of inorganic anions across the erythrocyte membrane. Mediates chloride-bicarbonate exchange in the kidney, and is required for normal acidification of the urine. In terms of biological role, (Microbial infection) Acts as a receptor for P.falciparum (isolate 3D7) MSP9 and thus, facilitates merozoite invasion of erythrocytes. Acts as a receptor for P.falciparum (isolate 3D7) MSP1 and thus, facilitates merozoite invasion of erythrocytes. In Homo sapiens (Human), this protein is Band 3 anion transport protein.